The chain runs to 769 residues: Glutathione biosynthesis bifunctional protein GshAB (769 aa).

The interval 1–347 (MLDSFKEDPN…QLADENENNI (347 aa)) is glutamate--cysteine ligase. Positions 514–768 (KLVLAEHDIR…IGDKILDFLF (255 aa)) constitute an ATP-grasp domain. 541-599 (SLFEDKQIVVKPKSTNYGWGISIFKNKFTLEDYQEALNIAFSYDSSVIIEEFIPGDEFR) is an ATP binding site. Mg(2+) is bound by residues D721, E738, and N740. Mn(2+)-binding residues include D721, E738, and N740.

The protein in the N-terminal section; belongs to the glutamate--cysteine ligase type 1 family. Type 2 subfamily. Monomer. The cofactor is Mg(2+). It depends on Mn(2+) as a cofactor.

It carries out the reaction L-cysteine + L-glutamate + ATP = gamma-L-glutamyl-L-cysteine + ADP + phosphate + H(+). The enzyme catalyses gamma-L-glutamyl-L-cysteine + glycine + ATP = glutathione + ADP + phosphate + H(+). It participates in sulfur metabolism; glutathione biosynthesis; glutathione from L-cysteine and L-glutamate: step 1/2. Its pathway is sulfur metabolism; glutathione biosynthesis; glutathione from L-cysteine and L-glutamate: step 2/2. In terms of biological role, synthesizes glutathione from L-glutamate and L-cysteine via gamma-L-glutamyl-L-cysteine. The sequence is that of Glutathione biosynthesis bifunctional protein GshAB from Listeria monocytogenes serovar 1/2a (strain ATCC BAA-679 / EGD-e).